Here is a 397-residue protein sequence, read N- to C-terminus: Lysophospholipid transporter LplT (397 aa).

Over 1–17 (MSESVHTNTSLWSKGMK) the chain is Periplasmic. Residues 18–38 (AVIVAQFLSAFGDNALLFATL) traverse the membrane as a helical segment. Residues 39-52 (ALLKAQFYPEWSQP) lie on the Cytoplasmic side of the membrane. A helical transmembrane segment spans residues 53-73 (ILQMVFVGAYILFAPFVGQVA). The Periplasmic portion of the chain corresponds to 74-90 (DSFAKGRVMMFANGLKL). Residues 91 to 111 (LGAASICFGINPFLGYTLVGV) traverse the membrane as a helical segment. The Cytoplasmic portion of the chain corresponds to 112–144 (GAAAYSPAKYGILGELTTGSKLVKANGLMEAST). A helical membrane pass occupies residues 145–165 (IAAILLGSVAGGVLADWHVLV). Residue alanine 166 is a topological domain, periplasmic. Residues 167 to 187 (LAACALAYGGAVVANIYIPKL) traverse the membrane as a helical segment. Over 188–226 (AAARPGQSWNLINMTRSFLNACTSLWRNGETRFSLVGTS) the chain is Cytoplasmic. Residues 227–247 (LFWGAGVTLRFLLVLWVPVAL) form a helical membrane-spanning segment. Residues 248 to 256 (GITDNATPT) lie on the Periplasmic side of the membrane. Residues 257 to 277 (YLNAMVAIGIVVGAGAAAKLV) form a helical membrane-spanning segment. Residues 278-280 (TLE) lie on the Cytoplasmic side of the membrane. A helical membrane pass occupies residues 281–301 (TVSRCMPAGILIGVVVLIFSL). Residues 302-304 (QHE) are Periplasmic-facing. Residues 305-325 (QLPAYALLMLIGVLGGFFVVP) form a helical membrane-spanning segment. The Cytoplasmic segment spans residues 326–343 (LNALLQERGKKSVGAGNA). Residues 344–364 (IAVQNLGENSAMLLMLGIYSL) traverse the membrane as a helical segment. Residues 365–366 (AV) lie on the Periplasmic side of the membrane. Residues 367-387 (MVGIPVVPIGIGFGALFALAI) form a helical membrane-spanning segment. The Cytoplasmic portion of the chain corresponds to 388 to 397 (TALWIWQRRH).

Belongs to the major facilitator superfamily. LplT (TC 2.A.1.42) family.

The protein localises to the cell inner membrane. In terms of biological role, catalyzes the facilitated diffusion of 2-acyl-glycero-3-phosphoethanolamine (2-acyl-GPE) into the cell. This chain is Lysophospholipid transporter LplT, found in Escherichia coli O157:H7 (strain EC4115 / EHEC).